The following is a 270-amino-acid chain: ATP synthase subunit a (270 aa).

The next 6 membrane-spanning stretches (helical) occupy residues 27–47, 90–110, 147–166, 182–202, 211–231, and 238–258; these read FWTF…VFIL, IAPL…MDLI, VNMT…FYSV, PFNT…SLIA, LFGN…TLGV, and FLWA…FMML.

The protein belongs to the ATPase A chain family. In terms of assembly, F-type ATPases have 2 components, CF(1) - the catalytic core - and CF(0) - the membrane proton channel. CF(1) has five subunits: alpha(3), beta(3), gamma(1), delta(1), epsilon(1). CF(0) has three main subunits: a(1), b(2) and c(9-12). The alpha and beta chains form an alternating ring which encloses part of the gamma chain. CF(1) is attached to CF(0) by a central stalk formed by the gamma and epsilon chains, while a peripheral stalk is formed by the delta and b chains.

It localises to the cell inner membrane. Key component of the proton channel; it plays a direct role in the translocation of protons across the membrane. The protein is ATP synthase subunit a of Pseudoalteromonas atlantica (strain T6c / ATCC BAA-1087).